The sequence spans 1295 residues: Phosphoribosylformylglycinamidine synthase (1295 aa).

Positions Ser-302–Pro-327 are disordered. ATP-binding positions include Gly-306–Asp-317 and Ala-677. Positions 678, 717, 721, and 884 each coordinate Mg(2+). Ser-886 contributes to the ATP binding site. The 254-residue stretch at Val-1042–Gly-1295 folds into the Glutamine amidotransferase type-1 domain. The Nucleophile role is filled by Cys-1135. Residues His-1260 and Glu-1262 contribute to the active site.

The protein in the N-terminal section; belongs to the FGAMS family. As to quaternary structure, monomer.

The protein resides in the cytoplasm. The enzyme catalyses N(2)-formyl-N(1)-(5-phospho-beta-D-ribosyl)glycinamide + L-glutamine + ATP + H2O = 2-formamido-N(1)-(5-O-phospho-beta-D-ribosyl)acetamidine + L-glutamate + ADP + phosphate + H(+). Its pathway is purine metabolism; IMP biosynthesis via de novo pathway; 5-amino-1-(5-phospho-D-ribosyl)imidazole from N(2)-formyl-N(1)-(5-phospho-D-ribosyl)glycinamide: step 1/2. Functionally, phosphoribosylformylglycinamidine synthase involved in the purines biosynthetic pathway. Catalyzes the ATP-dependent conversion of formylglycinamide ribonucleotide (FGAR) and glutamine to yield formylglycinamidine ribonucleotide (FGAM) and glutamate. In Photorhabdus laumondii subsp. laumondii (strain DSM 15139 / CIP 105565 / TT01) (Photorhabdus luminescens subsp. laumondii), this protein is Phosphoribosylformylglycinamidine synthase.